A 457-amino-acid chain; its full sequence is Argininosuccinate lyase (457 aa).

The protein belongs to the lyase 1 family. Argininosuccinate lyase subfamily.

Its subcellular location is the cytoplasm. The catalysed reaction is 2-(N(omega)-L-arginino)succinate = fumarate + L-arginine. Its pathway is amino-acid biosynthesis; L-arginine biosynthesis; L-arginine from L-ornithine and carbamoyl phosphate: step 3/3. The polypeptide is Argininosuccinate lyase (Cronobacter sakazakii (strain ATCC BAA-894) (Enterobacter sakazakii)).